The chain runs to 141 residues: Nucleoside diphosphate kinase (141 aa).

Positions 11, 59, 87, 93, 104, and 114 each coordinate ATP. H117 serves as the catalytic Pros-phosphohistidine intermediate.

It belongs to the NDK family. In terms of assembly, homotetramer. The cofactor is Mg(2+).

Its subcellular location is the cytoplasm. It carries out the reaction a 2'-deoxyribonucleoside 5'-diphosphate + ATP = a 2'-deoxyribonucleoside 5'-triphosphate + ADP. The catalysed reaction is a ribonucleoside 5'-diphosphate + ATP = a ribonucleoside 5'-triphosphate + ADP. Its function is as follows. Major role in the synthesis of nucleoside triphosphates other than ATP. The ATP gamma phosphate is transferred to the NDP beta phosphate via a ping-pong mechanism, using a phosphorylated active-site intermediate. This Xanthomonas axonopodis pv. citri (strain 306) protein is Nucleoside diphosphate kinase.